Here is a 292-residue protein sequence, read N- to C-terminus: Elongation factor Ts (292 aa).

Residues 82–85 (TDFV) form an involved in Mg(2+) ion dislocation from EF-Tu region.

Belongs to the EF-Ts family.

The protein resides in the cytoplasm. Associates with the EF-Tu.GDP complex and induces the exchange of GDP to GTP. It remains bound to the aminoacyl-tRNA.EF-Tu.GTP complex up to the GTP hydrolysis stage on the ribosome. This chain is Elongation factor Ts, found in Bordetella avium (strain 197N).